Here is a 588-residue protein sequence, read N- to C-terminus: Probable urocanate hydratase (588 aa).

Low complexity predominate over residues 1–15; sequence MDTPSAAAETSEPSA. A disordered region spans residues 1-22; sequence MDTPSAAAETSEPSAQWQAYRG. Residues 62–63, glutamine 140, 188–190, glutamate 208, arginine 213, 254–255, 275–279, and tyrosine 334 contribute to the NAD(+) site; these read GG, GMG, NA, and QTSAH. Cysteine 431 is a catalytic residue. Glycine 520 provides a ligand contact to NAD(+).

It belongs to the urocanase family. NAD(+) is required as a cofactor.

The protein localises to the cytoplasm. It catalyses the reaction 4-imidazolone-5-propanoate = trans-urocanate + H2O. It participates in amino-acid degradation; L-histidine degradation into L-glutamate; N-formimidoyl-L-glutamate from L-histidine: step 2/3. Functionally, catalyzes the conversion of urocanate to 4-imidazolone-5-propionate. The polypeptide is Probable urocanate hydratase (Halobacterium salinarum (strain ATCC 29341 / DSM 671 / R1)).